Here is a 339-residue protein sequence, read N- to C-terminus: Dihydroorotate dehydrogenase (quinone) (339 aa).

FMN is bound by residues 64–68 (AGADK) and Thr-88. Lys-68 is a substrate binding site. Residue 113 to 117 (NRNGF) participates in substrate binding. 2 residues coordinate FMN: Asn-141 and Asn-174. A substrate-binding site is contributed by Asn-174. The active-site Nucleophile is Ser-177. A substrate-binding site is contributed by Asn-179. The FMN site is built by Lys-219 and Thr-247. 248–249 (NT) lines the substrate pocket. FMN-binding positions include Gly-270, Gly-299, and 320–321 (YS).

Belongs to the dihydroorotate dehydrogenase family. Type 2 subfamily. Monomer. Requires FMN as cofactor.

It localises to the cell membrane. The enzyme catalyses (S)-dihydroorotate + a quinone = orotate + a quinol. Its pathway is pyrimidine metabolism; UMP biosynthesis via de novo pathway; orotate from (S)-dihydroorotate (quinone route): step 1/1. Its function is as follows. Catalyzes the conversion of dihydroorotate to orotate with quinone as electron acceptor. The chain is Dihydroorotate dehydrogenase (quinone) from Haemophilus influenzae (strain PittGG).